Consider the following 251-residue polypeptide: Retinoic acid early-inducible protein 1-epsilon (251 aa).

Residues 1-28 form the signal peptide; that stretch reads MAKAAVTKRHHFMIQKLLILLSYGYTNG. The cysteines at positions 37 and 56 are disulfide-linked. Asparagine 38, asparagine 70, asparagine 83, asparagine 141, and asparagine 154 each carry an N-linked (GlcNAc...) asparagine glycan. Cysteine 88 and cysteine 188 are oxidised to a cystine. The segment at 196-228 is disordered; sequence LKQSKEKPRSTSRSPSITQLTSTSPLPPPSHST. Residues 209 to 219 show a composition bias toward low complexity; sequence SPSITQLTSTS. Serine 225 carries the GPI-anchor amidated serine lipid modification. The propeptide at 226–251 is removed in mature form; sequence HSTSKKGFISVGLIFISLLFAFAFAM.

This sequence belongs to the NKG2D ligand family. Post-translationally, glycosylated.

It localises to the cell membrane. Acts as a ligand for KLRK1. This Mus musculus (Mouse) protein is Retinoic acid early-inducible protein 1-epsilon (Raet1e).